A 369-amino-acid chain; its full sequence is Peptide chain release factor 2 (369 aa).

Residue Q251 is modified to N5-methylglutamine.

This sequence belongs to the prokaryotic/mitochondrial release factor family. In terms of processing, methylated by PrmC. Methylation increases the termination efficiency of RF2.

It localises to the cytoplasm. Functionally, peptide chain release factor 2 directs the termination of translation in response to the peptide chain termination codons UGA and UAA. This chain is Peptide chain release factor 2, found in Acidothermus cellulolyticus (strain ATCC 43068 / DSM 8971 / 11B).